The following is a 111-amino-acid chain: Nucleoid-associated protein Cpha266_1171 (111 aa).

It belongs to the YbaB/EbfC family. In terms of assembly, homodimer.

The protein localises to the cytoplasm. Its subcellular location is the nucleoid. Its function is as follows. Binds to DNA and alters its conformation. May be involved in regulation of gene expression, nucleoid organization and DNA protection. This is Nucleoid-associated protein Cpha266_1171 from Chlorobium phaeobacteroides (strain DSM 266 / SMG 266 / 2430).